Reading from the N-terminus, the 122-residue chain is Large ribosomal subunit protein bL12 (122 aa).

It belongs to the bacterial ribosomal protein bL12 family. In terms of assembly, homodimer. Part of the ribosomal stalk of the 50S ribosomal subunit. Forms a multimeric L10(L12)X complex, where L10 forms an elongated spine to which 2 to 4 L12 dimers bind in a sequential fashion. Binds GTP-bound translation factors.

Forms part of the ribosomal stalk which helps the ribosome interact with GTP-bound translation factors. Is thus essential for accurate translation. This Vibrio parahaemolyticus serotype O3:K6 (strain RIMD 2210633) protein is Large ribosomal subunit protein bL12.